Here is a 190-residue protein sequence, read N- to C-terminus: U1 small nuclear ribonucleoprotein C-1 (190 aa).

The Matrin-type zinc-finger motif lies at 4–36; sequence YYCDYCDVFLVSESPSVRKAHNSGRNHLTNVRD. The interval 57-190 is disordered; the sequence is FETGGGNSTS…PDRARQLGLI (134 aa). Positions 72–82 are enriched in pro residues; the sequence is GNPPGSQPGPP. Residues 109-124 show a composition bias toward low complexity; that stretch reads AMLALMNGQNGMSSPG. Residues 125 to 141 are compositionally biased toward pro residues; that stretch reads SGPPPMRFAGPPIPNNM. Residues 180-190 are compositionally biased toward basic and acidic residues; the sequence is NPDRARQLGLI.

The protein belongs to the U1 small nuclear ribonucleoprotein C family. In terms of assembly, U1 snRNP is composed of the 7 core Sm proteins B/B', D1, D2, D3, E, F and G that assemble in a heptameric protein ring on the Sm site of the small nuclear RNA to form the core snRNP, and at least 3 U1 snRNP-specific proteins U1-70K, U1-A and U1-C. U1-C interacts with U1 snRNA and the 5' splice-site region of the pre-mRNA.

Its subcellular location is the nucleus. In terms of biological role, component of the spliceosomal U1 snRNP, which is essential for recognition of the pre-mRNA 5' splice-site and the subsequent assembly of the spliceosome. U1-C is directly involved in initial 5' splice-site recognition for both constitutive and regulated alternative splicing. The interaction with the 5' splice-site seems to precede base-pairing between the pre-mRNA and the U1 snRNA. Stimulates commitment or early (E) complex formation by stabilizing the base pairing of the 5' end of the U1 snRNA and the 5' splice-site region. This chain is U1 small nuclear ribonucleoprotein C-1, found in Puccinia graminis f. sp. tritici (strain CRL 75-36-700-3 / race SCCL) (Black stem rust fungus).